The sequence spans 418 residues: 3-phosphoshikimate 1-carboxyvinyltransferase (418 aa).

Lysine 26, serine 27, and arginine 31 together coordinate 3-phosphoshikimate. Lysine 26 is a phosphoenolpyruvate binding site. The phosphoenolpyruvate site is built by glycine 97 and arginine 125. 3-phosphoshikimate contacts are provided by serine 170, serine 171, glutamine 172, aspartate 297, asparagine 320, and lysine 324. Residue glutamine 172 coordinates phosphoenolpyruvate. Residue aspartate 297 is the Proton acceptor of the active site. Residues arginine 328, arginine 375, and lysine 400 each coordinate phosphoenolpyruvate.

It belongs to the EPSP synthase family. Monomer.

Its subcellular location is the cytoplasm. The catalysed reaction is 3-phosphoshikimate + phosphoenolpyruvate = 5-O-(1-carboxyvinyl)-3-phosphoshikimate + phosphate. It participates in metabolic intermediate biosynthesis; chorismate biosynthesis; chorismate from D-erythrose 4-phosphate and phosphoenolpyruvate: step 6/7. Its function is as follows. Catalyzes the transfer of the enolpyruvyl moiety of phosphoenolpyruvate (PEP) to the 5-hydroxyl of shikimate-3-phosphate (S3P) to produce enolpyruvyl shikimate-3-phosphate and inorganic phosphate. In Pseudomonas savastanoi pv. phaseolicola (strain 1448A / Race 6) (Pseudomonas syringae pv. phaseolicola (strain 1448A / Race 6)), this protein is 3-phosphoshikimate 1-carboxyvinyltransferase.